A 499-amino-acid chain; its full sequence is Bifunctional purine biosynthesis protein PurH (499 aa).

Residues 1–144 enclose the MGS-like domain; that stretch reads MIKRALISVF…KNFKDVVVLT (144 aa).

It belongs to the PurH family.

The enzyme catalyses (6R)-10-formyltetrahydrofolate + 5-amino-1-(5-phospho-beta-D-ribosyl)imidazole-4-carboxamide = 5-formamido-1-(5-phospho-D-ribosyl)imidazole-4-carboxamide + (6S)-5,6,7,8-tetrahydrofolate. It carries out the reaction IMP + H2O = 5-formamido-1-(5-phospho-D-ribosyl)imidazole-4-carboxamide. Its pathway is purine metabolism; IMP biosynthesis via de novo pathway; 5-formamido-1-(5-phospho-D-ribosyl)imidazole-4-carboxamide from 5-amino-1-(5-phospho-D-ribosyl)imidazole-4-carboxamide (10-formyl THF route): step 1/1. It functions in the pathway purine metabolism; IMP biosynthesis via de novo pathway; IMP from 5-formamido-1-(5-phospho-D-ribosyl)imidazole-4-carboxamide: step 1/1. This is Bifunctional purine biosynthesis protein PurH from Clostridium botulinum (strain Hall / ATCC 3502 / NCTC 13319 / Type A).